The sequence spans 316 residues: Serine protease 45 (316 aa).

The N-terminal stretch at 1 to 38 is a signal peptide; that stretch reads MAASLSRLSAGLAASRPLGLSRSFLLLVLLLLNSGYKG. In terms of domain architecture, Peptidase S1 spans 49–290; the sequence is WWPKNLDLSR…YSRWIKKQIS (242 aa). A disulfide bond links cysteine 74 and cysteine 90. The active-site Charge relay system is histidine 89. The N-linked (GlcNAc...) asparagine glycan is linked to asparagine 110. The Charge relay system role is filled by aspartate 137. Asparagine 162 and asparagine 186 each carry an N-linked (GlcNAc...) asparagine glycan. 3 disulfide bridges follow: cysteine 171-cysteine 248, cysteine 206-cysteine 229, and cysteine 238-cysteine 266. The active-site Charge relay system is serine 242.

This sequence belongs to the peptidase S1 family.

It localises to the secreted. This is Serine protease 45 (PRSS45) from Bos taurus (Bovine).